The sequence spans 327 residues: MSDRSLSELGEQGLLPLLQAFCPAEQRGDDAAILTPPAGQQLVVSSDVLVEGIHFSEATTPPAAIGWRAAAANLSDLAAMGATPAGITLALALPSDRRLSWLQQIYQGLDRCLKQYDCPLIGGDLSRSPTATLAVTALGWVNPNRVIRRSTAQVGDWIMATGTHGLSRLGLGHLLGEWTLAEPLRDQAIAAHQAPKPRLDVVPLLARSQPAGTVWRVAGMDSSDGLADAVLQICRASQVGAVIEALPLPATTSFDRDRLIQAALYGGEDFELVLCLSPDWAQALLELLGEQAQVIGQITEKPVVQLRLSDRTEILSLDRGFQHFTTH.

Residues Asp-30, Ser-45, Ser-46, and Asp-47 each coordinate Mg(2+). His-54 provides a ligand contact to substrate. Asp-76 serves as a coordination point for Mg(2+). ATP-binding positions include Tyr-106, 123 to 124 (GD), and Arg-149. Asp-124 contributes to the Mg(2+) binding site. Residue Asp-221 participates in Mg(2+) binding. ATP is bound at residue Ser-223. A Mg(2+)-binding site is contributed by Asp-224. Residues Glu-268 and Phe-321 each contribute to the substrate site.

The protein belongs to the thiamine-monophosphate kinase family.

It carries out the reaction thiamine phosphate + ATP = thiamine diphosphate + ADP. It participates in cofactor biosynthesis; thiamine diphosphate biosynthesis; thiamine diphosphate from thiamine phosphate: step 1/1. In terms of biological role, catalyzes the ATP-dependent phosphorylation of thiamine-monophosphate (TMP) to form thiamine-pyrophosphate (TPP), the active form of vitamin B1. The sequence is that of Thiamine-monophosphate kinase from Synechococcus elongatus (strain ATCC 33912 / PCC 7942 / FACHB-805) (Anacystis nidulans R2).